A 272-amino-acid chain; its full sequence is Shikimate dehydrogenase (NADP(+)) (272 aa).

Shikimate contacts are provided by residues 14-16 (SKS) and Thr61. Lys65 acts as the Proton acceptor in catalysis. Glu77 lines the NADP(+) pocket. Shikimate is bound by residues Asn86 and Asp102. NADP(+)-binding positions include 126–130 (GAGGA), 149–154 (NRTVSR), and Met213. Shikimate is bound at residue Tyr215. Gly237 provides a ligand contact to NADP(+).

Belongs to the shikimate dehydrogenase family. In terms of assembly, homodimer.

It carries out the reaction shikimate + NADP(+) = 3-dehydroshikimate + NADPH + H(+). Its pathway is metabolic intermediate biosynthesis; chorismate biosynthesis; chorismate from D-erythrose 4-phosphate and phosphoenolpyruvate: step 4/7. Functionally, involved in the biosynthesis of the chorismate, which leads to the biosynthesis of aromatic amino acids. Catalyzes the reversible NADPH linked reduction of 3-dehydroshikimate (DHSA) to yield shikimate (SA). The sequence is that of Shikimate dehydrogenase (NADP(+)) from Escherichia coli O139:H28 (strain E24377A / ETEC).